A 322-amino-acid chain; its full sequence is Carnosine N-methyltransferase 2 (322 aa).

Glu58 lines the substrate pocket. S-adenosyl-L-methionine-binding residues include Gly90, Glu119, Ser150, and Ile172. Residue Asn313 participates in substrate binding.

Belongs to the class I-like SAM-binding methyltransferase superfamily. HNMT family. Monomer.

It catalyses the reaction carnosine + S-adenosyl-L-methionine = anserine + S-adenosyl-L-homocysteine + H(+). In terms of biological role, N-methyltransferase that mediates the formation of anserine (beta-alanyl-N(Pi)-methyl-L-histidine) from carnosine. Anserine, a methylated derivative of carnosine (beta-alanyl-L-histidine), is an abundant constituent of vertebrate skeletal muscles. This chain is Carnosine N-methyltransferase 2, found in Gallus gallus (Chicken).